The following is a 236-amino-acid chain: 2,3,4,5-tetrahydropyridine-2,6-dicarboxylate N-acetyltransferase (236 aa).

The protein belongs to the transferase hexapeptide repeat family. DapH subfamily.

The enzyme catalyses (S)-2,3,4,5-tetrahydrodipicolinate + acetyl-CoA + H2O = L-2-acetamido-6-oxoheptanedioate + CoA. The protein operates within amino-acid biosynthesis; L-lysine biosynthesis via DAP pathway; LL-2,6-diaminopimelate from (S)-tetrahydrodipicolinate (acetylase route): step 1/3. Functionally, catalyzes the transfer of an acetyl group from acetyl-CoA to tetrahydrodipicolinate. This Bacillus licheniformis (strain ATCC 14580 / DSM 13 / JCM 2505 / CCUG 7422 / NBRC 12200 / NCIMB 9375 / NCTC 10341 / NRRL NRS-1264 / Gibson 46) protein is 2,3,4,5-tetrahydropyridine-2,6-dicarboxylate N-acetyltransferase.